The primary structure comprises 317 residues: Acetyl-coenzyme A carboxylase carboxyl transferase subunit alpha (317 aa).

Positions 37 to 292 (QISQKLEDTK…EEYILKAFNE (256 aa)) constitute a CoA carboxyltransferase C-terminal domain.

Belongs to the AccA family. As to quaternary structure, acetyl-CoA carboxylase is a heterohexamer composed of biotin carboxyl carrier protein (AccB), biotin carboxylase (AccC) and two subunits each of ACCase subunit alpha (AccA) and ACCase subunit beta (AccD).

The protein localises to the cytoplasm. It catalyses the reaction N(6)-carboxybiotinyl-L-lysyl-[protein] + acetyl-CoA = N(6)-biotinyl-L-lysyl-[protein] + malonyl-CoA. Its pathway is lipid metabolism; malonyl-CoA biosynthesis; malonyl-CoA from acetyl-CoA: step 1/1. Its function is as follows. Component of the acetyl coenzyme A carboxylase (ACC) complex. First, biotin carboxylase catalyzes the carboxylation of biotin on its carrier protein (BCCP) and then the CO(2) group is transferred by the carboxyltransferase to acetyl-CoA to form malonyl-CoA. The protein is Acetyl-coenzyme A carboxylase carboxyl transferase subunit alpha of Flavobacterium psychrophilum (strain ATCC 49511 / DSM 21280 / CIP 103535 / JIP02/86).